We begin with the raw amino-acid sequence, 130 residues long: Glycine cleavage system H protein (130 aa).

The region spanning 24-106 (IYSVGITEHA…YADGWLFRIR (83 aa)) is the Lipoyl-binding domain. Lys65 is modified (N6-lipoyllysine).

It belongs to the GcvH family. As to quaternary structure, the glycine cleavage system is composed of four proteins: P, T, L and H. Requires (R)-lipoate as cofactor.

In terms of biological role, the glycine cleavage system catalyzes the degradation of glycine. The H protein shuttles the methylamine group of glycine from the P protein to the T protein. This Pectobacterium carotovorum subsp. carotovorum (strain PC1) protein is Glycine cleavage system H protein.